The chain runs to 454 residues: MLNIMEVHETNKMIEQEKLDVRTITMGISLLDCAADSVDEVCENIYNKITTYAKDLVSTGRAIERDFGIPIVNKRITVTPISLVGASSCKSSEDFVKIAHALDRAAKKVGVDLIGGYSALVSKSMTPAEEMLIRSLPQALSETDIVCSSVNVGSTKTGIDMNSVELLGHIVKDIAHATADNDSYGCVKFVAFCNAPDDNPFMAGGFHGVTEGDAVINVGVSGPGVVSRALDEAKGKDFEFLCETIKRTAFKITRVGQLVAQEASRRLGIPFGIIDLSLAPTPAVGDSVGEVLEKIGLEQVGAPGTTAALAMLNDQVKKGGIMASSYVGGLSGAFIPVSEDKNMIDAANNGCLKIEKLEAMTCVCSVGLDMIAIPGDTTAATISGIIADEAAIGMVNQKTTAVRVIPVEGKGVGEMANFGGLMGYAPIIPVNQTSCEAFVTRGGRIPAPIHSFKN.

The protein belongs to the UPF0210 family. In terms of assembly, homodimer.

The sequence is that of UPF0210 protein BAD_1323 from Bifidobacterium adolescentis (strain ATCC 15703 / DSM 20083 / NCTC 11814 / E194a).